The chain runs to 719 residues: Protein lin-15A (719 aa).

4 disordered regions span residues 179 to 199, 419 to 464, 559 to 626, and 684 to 719; these read FSHF…EGSQ, YRDH…SISW, LTTA…PTKT, and AKQV…EPIF. Residues 570–579 are compositionally biased toward low complexity; the sequence is STSTDSSSSS. The segment covering 604 to 617 has biased composition (polar residues); that stretch reads LLQNKPTHVESSSP. Basic and acidic residues predominate over residues 693–719; it reads EPKHIPPTHMEKKPEELLMDPKPEPIF.

It localises to the nucleus. Synthetic multivulva (synMuv) class A protein. SynMuv proteins are required to repress the induction of vulval development. Acts redundantly with SynMuv class B protein lin-15B, and lin-35 to negatively regulate vulval development, most likely through antagonization of the Ras-signaling pathway. May also negatively regulate vulval development in association with other SynMuv class B proteins such as dpl-1 and efl-1. Regulates let-23 basal activity. Required for the correct expression and/or stability of lin-56. This chain is Protein lin-15A, found in Caenorhabditis elegans.